The chain runs to 180 residues: MKPERKRVSKLMAYILRHSPEEFGLRPDVEGFVSLNELVNALKTVYPEVTEEFVREIVENDPKGRYEIRGDRIRARYGHSFPVSLDHEEDTESRFLYHGTPRRNLPSILKEGLKPMKRQYVHVSTDKIEALETGRRHGREVVLLVIDAECLRKRGFKIYKAGKNVRIVERVPPDCITLAV.

Belongs to the KptA/TPT1 family.

Removes the 2'-phosphate from RNA via an intermediate in which the phosphate is ADP-ribosylated by NAD followed by a presumed transesterification to release the RNA and generate ADP-ribose 1''-2''-cyclic phosphate (APPR&gt;P). May function as an ADP-ribosylase. The polypeptide is Probable RNA 2'-phosphotransferase (Thermococcus kodakarensis (strain ATCC BAA-918 / JCM 12380 / KOD1) (Pyrococcus kodakaraensis (strain KOD1))).